The following is a 73-amino-acid chain: UPF0435 protein BH2488 (73 aa).

It belongs to the UPF0435 family.

In Halalkalibacterium halodurans (strain ATCC BAA-125 / DSM 18197 / FERM 7344 / JCM 9153 / C-125) (Bacillus halodurans), this protein is UPF0435 protein BH2488.